We begin with the raw amino-acid sequence, 146 residues long: Large ribosomal subunit protein uL23B (146 aa).

The segment at 1–22 (MAPSSNKVGKAIQAKKAVVKGS) is disordered.

The protein belongs to the universal ribosomal protein uL23 family.

Functionally, this protein binds to a specific region on the 26S rRNA. This is Large ribosomal subunit protein uL23B (rpl-23A.2) from Caenorhabditis elegans.